A 119-amino-acid chain; its full sequence is Large ribosomal subunit protein uL22 (119 aa).

The protein belongs to the universal ribosomal protein uL22 family. Part of the 50S ribosomal subunit.

In terms of biological role, this protein binds specifically to 23S rRNA; its binding is stimulated by other ribosomal proteins, e.g. L4, L17, and L20. It is important during the early stages of 50S assembly. It makes multiple contacts with different domains of the 23S rRNA in the assembled 50S subunit and ribosome. Its function is as follows. The globular domain of the protein is located near the polypeptide exit tunnel on the outside of the subunit, while an extended beta-hairpin is found that lines the wall of the exit tunnel in the center of the 70S ribosome. The chain is Large ribosomal subunit protein uL22 from Pelodictyon phaeoclathratiforme (strain DSM 5477 / BU-1).